Reading from the N-terminus, the 215-residue chain is Protein GET1 (215 aa).

At 1–4 the chain is on the lumenal side; it reads MINL. Residues 5 to 24 form a helical membrane-spanning segment; sequence ALVIFLCTLLNQIVSWVGKS. Residues 25 to 108 lie on the Cytoplasmic side of the membrane; the sequence is VLQEIAFTAY…SFSKKFSTLL (84 aa). A coiled-coil region spans residues 73–94; that stretch reads AKLRRKLDKGLADLEKTNNTLS. The helical transmembrane segment at 109–129 threads the bilayer; it reads WLMTTGAQFLLSWWFRKQPIF. Topologically, residues 130–153 are lumenal; it reads WLPEGWVPYPVAWLLSFPSAPIGS. Residues 154–170 traverse the membrane as a helical segment; that stretch reads VSSGAWGAICRRVLSTL. The Cytoplasmic segment spans residues 171–215; it reads QEIIQSLLAPSPAATGPVPTGPSSAKNDQPEAKIEALALEHEKLD. The interval 182 to 202 is disordered; it reads PAATGPVPTGPSSAKNDQPEA.

It belongs to the WRB/GET1 family. As to quaternary structure, interacts with GET3.

The protein localises to the endoplasmic reticulum membrane. Its function is as follows. Required for the post-translational delivery of tail-anchored (TA) proteins to the endoplasmic reticulum. Acts as a membrane receptor for soluble GET3, which recognizes and selectively binds the transmembrane domain of TA proteins in the cytosol. The polypeptide is Protein GET1 (Cryptococcus neoformans var. neoformans serotype D (strain JEC21 / ATCC MYA-565) (Filobasidiella neoformans)).